Reading from the N-terminus, the 554-residue chain is Valerianol synthase TPS1B (554 aa).

D307 and D311 together coordinate Mg(2+). The DDXXD motif signature appears at 326–330; sequence VQRWD. D452, S456, and E460 together coordinate Mg(2+).

This sequence belongs to the terpene synthase family. It depends on Mg(2+) as a cofactor.

It catalyses the reaction (2E,6E)-farnesyl diphosphate + H2O = valerianol + diphosphate. Its pathway is secondary metabolite biosynthesis; terpenoid biosynthesis. In terms of biological role, terpene synthase that catalyzes the biosynthesis of the terpene valerianol, which is a volatile compound of floral scent. In Camellia hiemalis (Camellia), this protein is Valerianol synthase TPS1B.